The following is an 826-amino-acid chain: Putative ankyrin repeat protein RBE_0220 (826 aa).

ANK repeat units lie at residues 308 to 337 (LGTS…DQHA), 342 to 371 (IDMS…DPNY), 375 to 404 (DNDT…DPNK), 445 to 474 (NDFT…DVNA), 478 to 507 (DGFT…NPDV), 512 to 541 (TKSS…NPNL), 545 to 574 (DGTT…DINK), and 578 to 607 (NGDN…DLKK).

This is Putative ankyrin repeat protein RBE_0220 from Rickettsia bellii (strain RML369-C).